The following is a 369-amino-acid chain: Flagellar P-ring protein 2 (369 aa).

The first 24 residues, 1–24, serve as a signal peptide directing secretion; that stretch reads MCAFAAILSLLSVLLMATSRSSDA.

It belongs to the FlgI family. As to quaternary structure, the basal body constitutes a major portion of the flagellar organelle and consists of four rings (L,P,S, and M) mounted on a central rod.

It localises to the periplasm. It is found in the bacterial flagellum basal body. Assembles around the rod to form the L-ring and probably protects the motor/basal body from shearing forces during rotation. This chain is Flagellar P-ring protein 2, found in Burkholderia thailandensis (strain ATCC 700388 / DSM 13276 / CCUG 48851 / CIP 106301 / E264).